The primary structure comprises 41 residues: Photosystem I reaction center subunit IX (41 aa).

A helical transmembrane segment spans residues 7 to 27 (YLSTAPVLATVWMIITAGILI).

The protein belongs to the PsaJ family.

It localises to the cellular thylakoid membrane. Its function is as follows. May help in the organization of the PsaE and PsaF subunits. This Trichodesmium erythraeum (strain IMS101) protein is Photosystem I reaction center subunit IX.